The sequence spans 119 residues: Large ribosomal subunit protein eL8 (119 aa).

It belongs to the eukaryotic ribosomal protein eL8 family. Part of the 50S ribosomal subunit. Probably part of the RNase P complex.

It localises to the cytoplasm. Multifunctional RNA-binding protein that recognizes the K-turn motif in ribosomal RNA, the RNA component of RNase P, box H/ACA, box C/D and box C'/D' sRNAs. In Archaeoglobus fulgidus (strain ATCC 49558 / DSM 4304 / JCM 9628 / NBRC 100126 / VC-16), this protein is Large ribosomal subunit protein eL8.